Here is a 134-residue protein sequence, read N- to C-terminus: Fatty acid-binding protein, muscle (134 aa).

Residues arginine 109 and 129-131 (RIY) contribute to the (9Z)-octadecenoate site.

Belongs to the calycin superfamily. Fatty-acid binding protein (FABP) family. As to quaternary structure, monomer. In terms of tissue distribution, adult flight muscle.

Its subcellular location is the cytoplasm. Its function is as follows. Binds fatty acids in a 1:1 molar ratio. The polypeptide is Fatty acid-binding protein, muscle (Schistocerca gregaria (Desert locust)).